The chain runs to 176 residues: Cathelicidin-2 (176 aa).

A signal peptide spans 1–29 (METQGASLSLGRWSLWLLLLGLVLPSASA). Gln-30 is subject to Pyrrolidone carboxylic acid. Positions 30-130 (QALSYREAVL…DINCNELQSV (101 aa)) are excised as a propeptide. Disulfide bonds link Cys-85-Cys-96 and Cys-107-Cys-124. A disordered region spans residues 135–176 (PIRRPPIRPPFRPPFRPPVRPPIRPPFRPPFRPPIGPFPGRR). Residues 141-176 (IRPPFRPPFRPPVRPPIRPPFRPPFRPPIGPFPGRR) show a composition bias toward pro residues. Proline amide is present on Pro-173. A propeptide spans 174–176 (GRR) (removed in mature form).

It belongs to the cathelicidin family. Elastase is responsible for its maturation.

Its subcellular location is the secreted. Functionally, binds to the lipid A moiety of bacterial lipipolysaccharides (LPS), a glycolipid present in the outer membrane of all Gram-negative bacteria. Potent antimicrobial activity. This Ovis aries (Sheep) protein is Cathelicidin-2 (CATHL2).